A 499-amino-acid polypeptide reads, in one-letter code: Maturase K (499 aa).

The protein belongs to the intron maturase 2 family. MatK subfamily.

It localises to the plastid. The protein localises to the chloroplast. Its function is as follows. Usually encoded in the trnK tRNA gene intron. Probably assists in splicing its own and other chloroplast group II introns. This chain is Maturase K, found in Neltuma juliflora (Mesquite).